The following is a 398-amino-acid chain: Acetate kinase (398 aa).

Asn-8 is a Mg(2+) binding site. ATP is bound at residue Lys-15. Arg-90 is a substrate binding site. Asp-147 serves as the catalytic Proton donor/acceptor. Residues 207–211, 282–284, and 330–334 contribute to the ATP site; these read HIGAG, DMR, and GVGEN. Glu-383 is a Mg(2+) binding site.

The protein belongs to the acetokinase family. In terms of assembly, homodimer. Mg(2+) serves as cofactor. Mn(2+) is required as a cofactor.

The protein localises to the cytoplasm. It carries out the reaction acetate + ATP = acetyl phosphate + ADP. Its pathway is metabolic intermediate biosynthesis; acetyl-CoA biosynthesis; acetyl-CoA from acetate: step 1/2. Its function is as follows. Catalyzes the formation of acetyl phosphate from acetate and ATP. Can also catalyze the reverse reaction. This chain is Acetate kinase, found in Limosilactobacillus fermentum (strain NBRC 3956 / LMG 18251) (Lactobacillus fermentum).